Consider the following 746-residue polypeptide: Stromal interaction molecule 2 (746 aa).

A signal peptide spans 1–14 (MLVLGLLVAGAADG). The Extracellular segment spans residues 15–218 (CELVPRHLRG…RPPHNWMKDF (204 aa)). The 36-residue stretch at 67–102 (FSLEALQTIHKQMDDDKDGGIEVEESDEFIREDMKY) folds into the EF-hand domain. Positions 80, 82, 84, and 91 each coordinate Ca(2+). Asn135 carries an N-linked (GlcNAc...) asparagine glycan. The 69-residue stretch at 136–204 (WTLEDTLQWL…QLKALDVVLF (69 aa)) folds into the SAM domain. A helical transmembrane segment spans residues 219 to 235 (ILTVSIVIGVGGCWFAY). Residues 236-746 (TQNKTSKEHV…IKSLFKKKSK (511 aa)) lie on the Cytoplasmic side of the membrane. A coiled-coil region spans residues 247–394 (KMMKDLESLQ…EKIKKKRSTV (148 aa)). The disordered stretch occupies residues 483 to 562 (DLDEDTPPIV…SLPSPDPDIL (80 aa)). Ser523 carries the phosphoserine modification. Positions 537-549 (HPSHPRHPHHPQH) are enriched in basic residues. Phosphoserine occurs at positions 609, 621, 640, 650, 661, 665, 680, and 697. The tract at residues 685-746 (SSGIPVPKPR…IKSLFKKKSK (62 aa)) is disordered. A compositionally biased stretch (basic and acidic residues) spans 723 to 732 (DLCHNGEKSK). Residues 733–746 (KPSKIKSLFKKKSK) are compositionally biased toward basic residues.

As to quaternary structure, oligomer with STIM1. Interacts with ORAI1. Post-translationally, glycosylated. Phosphorylated predominantly on Ser residues. In terms of tissue distribution, expressed in all tissues and tumor cell lines examined.

Its subcellular location is the endoplasmic reticulum membrane. Its function is as follows. Plays a role in mediating store-operated Ca(2+) entry (SOCE), a Ca(2+) influx following depletion of intracellular Ca(2+) stores. Functions as a highly sensitive Ca(2+) sensor in the endoplasmic reticulum which activates both store-operated and store-independent Ca(2+)-influx. Regulates basal cytosolic and endoplasmic reticulum Ca(2+) concentrations. Upon mild variations of the endoplasmic reticulum Ca(2+) concentration, translocates from the endoplasmic reticulum to the plasma membrane where it probably activates the Ca(2+) release-activated Ca(2+) (CRAC) channels ORAI1, ORAI2 and ORAI3. May inhibit STIM1-mediated Ca(2+) influx. This chain is Stromal interaction molecule 2 (STIM2), found in Homo sapiens (Human).